Consider the following 480-residue polypeptide: Endothelial transcription factor GATA-2 (480 aa).

Ser73 is subject to Phosphoserine. The residue at position 86 (Arg86) is an Asymmetric dimethylarginine. Residues 166–208 are disordered; it reads SGSHLFGFPPTPPKEVSPDPSTTGAASPASPSAGGSVARGEDK. Over residues 183–201 the composition is skewed to low complexity; that stretch reads PDPSTTGAASPASPSAGGS. At Ser192 the chain carries Phosphoserine. 2 consecutive GATA-type zinc fingers follow at residues 295–319 and 349–373; these read CVNC…CNAC and CANC…CNAC. Lys389 participates in a covalent cross-link: Glycyl lysine isopeptide (Lys-Gly) (interchain with G-Cter in SUMO2). Positions 457–480 are disordered; the sequence is TPIHPSSSLSFGHPHPSSMVTAMG.

In terms of assembly, interacts with BRD3. Interacts with AR and CCAR1. Interacts with MDFIC.

It is found in the nucleus. Functionally, transcriptional activator which regulates endothelin-1 gene expression in endothelial cells. Binds to the consensus sequence 5'-AGATAG-3'. Plays an important role in the regulation of phagocytosis in alveolar macrophages, particularly during P.carinii infection. The protein is Endothelial transcription factor GATA-2 of Rattus norvegicus (Rat).